We begin with the raw amino-acid sequence, 103 residues long: Co-chaperonin GroES (103 aa).

Belongs to the GroES chaperonin family. Heptamer of 7 subunits arranged in a ring. Interacts with the chaperonin GroEL.

The protein resides in the cytoplasm. Together with the chaperonin GroEL, plays an essential role in assisting protein folding. The GroEL-GroES system forms a nano-cage that allows encapsulation of the non-native substrate proteins and provides a physical environment optimized to promote and accelerate protein folding. GroES binds to the apical surface of the GroEL ring, thereby capping the opening of the GroEL channel. In Synechococcus elongatus (strain ATCC 33912 / PCC 7942 / FACHB-805) (Anacystis nidulans R2), this protein is Co-chaperonin GroES.